The primary structure comprises 88 residues: Molybdopterin synthase sulfur carrier subunit (88 aa).

A 1-thioglycine; alternate modification is found at G88. G88 is modified (glycyl adenylate; alternate).

The protein belongs to the MoaD family. MOCS2A subfamily. In terms of assembly, heterotetramer; composed of 2 small (MOCS2A) and 2 large (MOCS2B) subunits. C-terminal thiocarboxylation occurs in 2 steps, it is first acyl-adenylated (-COAMP) via the hesA/moeB/thiF part of uba4, then thiocarboxylated (-COSH) via the rhodanese domain of uba4.

The protein resides in the cytoplasm. Its pathway is cofactor biosynthesis; molybdopterin biosynthesis. Its function is as follows. Acts as a sulfur carrier required for molybdopterin biosynthesis. Component of the molybdopterin synthase complex that catalyzes the conversion of precursor Z into molybdopterin by mediating the incorporation of 2 sulfur atoms into precursor Z to generate a dithiolene group. In the complex, serves as sulfur donor by being thiocarboxylated (-COSH) at its C-terminus by uba4. After interaction with MOCS2B, the sulfur is then transferred to precursor Z to form molybdopterin. The polypeptide is Molybdopterin synthase sulfur carrier subunit (Aspergillus niger (strain ATCC MYA-4892 / CBS 513.88 / FGSC A1513)).